A 433-amino-acid chain; its full sequence is Vesicle-associated protein (433 aa).

Repeat copies occupy residues 112–122 (GGGIGGGLGGG) and 219–229 (GGGIGGGLGGG). The tract at residues 112–350 (GGGIGGGLGG…GGIGGGLGGG (239 aa)) is 3 X 11 AA repeats of G-G-G-I-G-G-G-L-G-G-G. Positions 266-274 (VDGKKKGKG) match the Nuclear localization signal motif. Repeat unit 3 spans residues 340–350 (GGGIGGGLGGG). Disordered regions lie at residues 366–389 (RVGGDISGPDLDVSGPDLDIDGDG) and 411–433 (HGKGDIDVDADVDIERPDLNVSG). The span at 423 to 433 (DIERPDLNVSG) shows a compositional bias: basic and acidic residues.

In terms of tissue distribution, egg cortex.

It is found in the microsome membrane. It localises to the nucleus. The protein resides in the endoplasmic reticulum membrane. May function as a multidomain RNA-binding protein. May play a role in nuclear RNA processing and in early development. This Strongylocentrotus purpuratus (Purple sea urchin) protein is Vesicle-associated protein (VAP-1).